Reading from the N-terminus, the 176-residue chain is Peptide methionine sulfoxide reductase MsrA (176 aa).

The active site involves Cys10.

The protein belongs to the MsrA Met sulfoxide reductase family.

It carries out the reaction L-methionyl-[protein] + [thioredoxin]-disulfide + H2O = L-methionyl-(S)-S-oxide-[protein] + [thioredoxin]-dithiol. The enzyme catalyses [thioredoxin]-disulfide + L-methionine + H2O = L-methionine (S)-S-oxide + [thioredoxin]-dithiol. Has an important function as a repair enzyme for proteins that have been inactivated by oxidation. Catalyzes the reversible oxidation-reduction of methionine sulfoxide in proteins to methionine. This is Peptide methionine sulfoxide reductase MsrA from Chromobacterium violaceum (strain ATCC 12472 / DSM 30191 / JCM 1249 / CCUG 213 / NBRC 12614 / NCIMB 9131 / NCTC 9757 / MK).